The primary structure comprises 78 residues: Large ribosomal subunit protein bL28 (78 aa).

Residues 1-23 (MSRKCQITGKKANNAMAVSHSHR) are disordered.

The protein belongs to the bacterial ribosomal protein bL28 family.

The sequence is that of Large ribosomal subunit protein bL28 from Picosynechococcus sp. (strain ATCC 27264 / PCC 7002 / PR-6) (Agmenellum quadruplicatum).